A 91-amino-acid polypeptide reads, in one-letter code: Small ribosomal subunit protein bS16 (91 aa).

This sequence belongs to the bacterial ribosomal protein bS16 family.

The protein is Small ribosomal subunit protein bS16 of Streptococcus mutans serotype c (strain ATCC 700610 / UA159).